A 109-amino-acid polypeptide reads, in one-letter code: Putative double-stranded DNA mimic protein YciU (109 aa).

This sequence belongs to the putative dsDNA mimic protein family.

Functionally, may act as a double-stranded DNA (dsDNA) mimic. Probably regulates the activity of a dsDNA-binding protein. The polypeptide is Putative double-stranded DNA mimic protein YciU (Shigella boydii serotype 18 (strain CDC 3083-94 / BS512)).